The following is a 67-amino-acid chain: Putative antitoxin PF1308 (67 aa).

This sequence belongs to the UPF0165 family.

In terms of biological role, possibly the antitoxin component of a type II toxin-antitoxin (TA) system. The chain is Putative antitoxin PF1308 from Pyrococcus furiosus (strain ATCC 43587 / DSM 3638 / JCM 8422 / Vc1).